The primary structure comprises 37 residues: Protease 2 large chain (37 aa).

Basic and acidic residues predominate over residues 1 to 14 (NDGNGRDSDPHDPG). A disordered region spans residues 1–37 (NDGNGRDSDPHDPGDWTTAGQCGLWQPARNSQHWTLV). Positions 28 to 37 (ARNSQHWTLV) are enriched in polar residues.

The protein belongs to the peptidase S8 family. In terms of assembly, heterodimer of a large and a small chain.

It localises to the secreted. The sequence is that of Protease 2 large chain from Achromobacter lyticus.